A 342-amino-acid chain; its full sequence is Flotillin-like protein FloA (342 aa).

Transmembrane regions (helical) follow at residues 18 to 38 (FFIF…GKFI) and 39 to 59 (SLWF…IIGM).

Belongs to the flotillin-like FloA family. Homooligomerizes.

It is found in the cell membrane. The protein resides in the membrane raft. Found in functional membrane microdomains (FMM) that may be equivalent to eukaryotic membrane rafts. FMMs are highly dynamic and increase in number as cells age. Flotillins are thought to be important factors in membrane fluidity. The chain is Flotillin-like protein FloA from Protochlamydia amoebophila (strain UWE25).